Here is a 440-residue protein sequence, read N- to C-terminus: NADH-quinone oxidoreductase subunit H (440 aa).

9 consecutive transmembrane segments (helical) span residues 11-31 (VWLI…WTIF), 83-103 (IVFN…WSVI), 123-143 (VPVA…GVVL), 164-184 (MISY…FSGS), 207-227 (IAGH…ITMF), 261-281 (FLAE…LFLG), 299-319 (WWGL…FVWV), 331-351 (FMDL…LLVA), and 366-386 (VFLV…FMGG).

This sequence belongs to the complex I subunit 1 family. In terms of assembly, NDH-1 is composed of 14 different subunits. Subunits NuoA, H, J, K, L, M, N constitute the membrane sector of the complex.

The protein resides in the cell membrane. The catalysed reaction is a quinone + NADH + 5 H(+)(in) = a quinol + NAD(+) + 4 H(+)(out). Functionally, NDH-1 shuttles electrons from NADH, via FMN and iron-sulfur (Fe-S) centers, to quinones in the respiratory chain. The immediate electron acceptor for the enzyme in this species is believed to be ubiquinone. Couples the redox reaction to proton translocation (for every two electrons transferred, four hydrogen ions are translocated across the cytoplasmic membrane), and thus conserves the redox energy in a proton gradient. This subunit may bind ubiquinone. This chain is NADH-quinone oxidoreductase subunit H, found in Cutibacterium acnes (strain DSM 16379 / KPA171202) (Propionibacterium acnes).